The primary structure comprises 291 residues: Succinate--CoA ligase [ADP-forming] subunit alpha 1 (291 aa).

Residues 20 to 23 (TGFQ), Lys46, and 99 to 101 (VTE) contribute to the CoA site. A substrate-binding site is contributed by Tyr162. His249 (tele-phosphohistidine intermediate) is an active-site residue.

The protein belongs to the succinate/malate CoA ligase alpha subunit family. Heterotetramer of two alpha and two beta subunits.

It carries out the reaction succinate + ATP + CoA = succinyl-CoA + ADP + phosphate. The catalysed reaction is GTP + succinate + CoA = succinyl-CoA + GDP + phosphate. The protein operates within carbohydrate metabolism; tricarboxylic acid cycle; succinate from succinyl-CoA (ligase route): step 1/1. Functionally, succinyl-CoA synthetase functions in the citric acid cycle (TCA), coupling the hydrolysis of succinyl-CoA to the synthesis of either ATP or GTP and thus represents the only step of substrate-level phosphorylation in the TCA. The alpha subunit of the enzyme binds the substrates coenzyme A and phosphate, while succinate binding and nucleotide specificity is provided by the beta subunit. This chain is Succinate--CoA ligase [ADP-forming] subunit alpha 1, found in Archaeoglobus fulgidus (strain ATCC 49558 / DSM 4304 / JCM 9628 / NBRC 100126 / VC-16).